The following is a 343-amino-acid chain: Uroporphyrinogen decarboxylase (343 aa).

Residues 23-27, aspartate 73, tyrosine 150, serine 205, and histidine 322 each bind substrate; that span reads RQAGR.

Belongs to the uroporphyrinogen decarboxylase family. In terms of assembly, homodimer.

The protein localises to the cytoplasm. The enzyme catalyses uroporphyrinogen III + 4 H(+) = coproporphyrinogen III + 4 CO2. It functions in the pathway porphyrin-containing compound metabolism; protoporphyrin-IX biosynthesis; coproporphyrinogen-III from 5-aminolevulinate: step 4/4. Catalyzes the decarboxylation of four acetate groups of uroporphyrinogen-III to yield coproporphyrinogen-III. The protein is Uroporphyrinogen decarboxylase of Cereibacter sphaeroides (strain ATCC 17029 / ATH 2.4.9) (Rhodobacter sphaeroides).